We begin with the raw amino-acid sequence, 336 residues long: Casein kinase II subunit alpha (336 aa).

One can recognise a Protein kinase domain in the interval 32 to 317 (YEVVRKIGRG…AKEAMAHPYF (286 aa)). ATP-binding positions include 38 to 46 (IGRGKYSEV) and K61. D149 serves as the catalytic Proton acceptor.

The protein belongs to the protein kinase superfamily. Ser/Thr protein kinase family. CK2 subfamily. Tetramer composed of two alpha chains, one beta chain and one beta' chain.

The enzyme catalyses L-seryl-[protein] + ATP = O-phospho-L-seryl-[protein] + ADP + H(+). It catalyses the reaction L-threonyl-[protein] + ATP = O-phospho-L-threonyl-[protein] + ADP + H(+). Catalytic subunit of a constitutively active serine/threonine-protein kinase complex that phosphorylates a large number of substrates containing acidic residues C-terminal to the phosphorylated serine or threonine. Phosphorylates the frq clock protein thus regulating the circadian clock. In Neurospora crassa (strain ATCC 24698 / 74-OR23-1A / CBS 708.71 / DSM 1257 / FGSC 987), this protein is Casein kinase II subunit alpha (cka).